The sequence spans 221 residues: Coiled-coil domain-containing protein 70 (221 aa).

Positions 129 to 168 (NALWEKDRNLLQEDKALWEEEKALWVEERALLEEEKALWE) form a coiled coil.

This is Coiled-coil domain-containing protein 70 (CCDC70) from Macaca fascicularis (Crab-eating macaque).